The chain runs to 512 residues: Probable capsid protein 4 (512 aa).

Belongs to the NCLDV major capsid protein family.

It is found in the virion. The protein is Probable capsid protein 4 of Acanthamoeba polyphaga mimivirus (APMV).